A 660-amino-acid polypeptide reads, in one-letter code: Acetyl-coenzyme A synthetase (660 aa).

Residues Arg-197–Lys-200 and Thr-317 contribute to the CoA site. Residues Gly-397–Pro-399, Asp-421–Thr-426, Asp-512, and Arg-528 each bind ATP. Ser-536 is a CoA binding site. Residue Arg-539 participates in ATP binding. The Mg(2+) site is built by Val-550 and Val-555. N6-acetyllysine is present on Lys-625.

Belongs to the ATP-dependent AMP-binding enzyme family. It depends on Mg(2+) as a cofactor. In terms of processing, acetylated. Deacetylation by the SIR2-homolog deacetylase activates the enzyme.

It catalyses the reaction acetate + ATP + CoA = acetyl-CoA + AMP + diphosphate. In terms of biological role, catalyzes the conversion of acetate into acetyl-CoA (AcCoA), an essential intermediate at the junction of anabolic and catabolic pathways. AcsA undergoes a two-step reaction. In the first half reaction, AcsA combines acetate with ATP to form acetyl-adenylate (AcAMP) intermediate. In the second half reaction, it can then transfer the acetyl group from AcAMP to the sulfhydryl group of CoA, forming the product AcCoA. The polypeptide is Acetyl-coenzyme A synthetase (Ralstonia nicotianae (strain ATCC BAA-1114 / GMI1000) (Ralstonia solanacearum)).